The chain runs to 438 residues: Trigger factor (438 aa).

The PPIase FKBP-type domain occupies 163–248 (GDKLNIDFEG…VKRIETTEAR (86 aa)).

The protein belongs to the FKBP-type PPIase family. Tig subfamily.

The protein resides in the cytoplasm. It catalyses the reaction [protein]-peptidylproline (omega=180) = [protein]-peptidylproline (omega=0). In terms of biological role, involved in protein export. Acts as a chaperone by maintaining the newly synthesized protein in an open conformation. Functions as a peptidyl-prolyl cis-trans isomerase. The sequence is that of Trigger factor from Syntrophomonas wolfei subsp. wolfei (strain DSM 2245B / Goettingen).